Consider the following 131-residue polypeptide: Fluoride-specific ion channel FluC (131 aa).

4 helical membrane-spanning segments follow: residues 4-24 (LWIM…TGFV), 30-50 (GIFP…IGFF), 68-88 (LFVM…SLQT), and 104-124 (IALS…VAVA). Residues glycine 76 and threonine 79 each coordinate Na(+).

Belongs to the fluoride channel Fluc/FEX (TC 1.A.43) family.

It is found in the cell inner membrane. The enzyme catalyses fluoride(in) = fluoride(out). With respect to regulation, na(+) is not transported, but it plays an essential structural role and its presence is essential for fluoride channel function. In terms of biological role, fluoride-specific ion channel. Important for reducing fluoride concentration in the cell, thus reducing its toxicity. This is Fluoride-specific ion channel FluC from Methylocella silvestris (strain DSM 15510 / CIP 108128 / LMG 27833 / NCIMB 13906 / BL2).